A 520-amino-acid chain; its full sequence is MEISYGRALYRNFLGQSPDWYKLCLLGFLILNPLVFWVSPFTAGWLLVIEFIFTLAMALKCYPLLPGGLLAVEALFIGMTSAEHVREEVANNLAVVLLLIFMVAGIYFMKQLLLLIFTRLLLGIRSKTLLSLAFCFAAAFLSAFLDALTVVAVVISVAVGFYGIYHRVASNRDEGQELVDDAQLDDERRATLERFRAFLRSLMMHAGVGTALGGVMTMVGEPQNLIIAHAAGWSFGDFLLRVAPVSVPVFICGIVTCILVEKTKSFGYGEPLPEPVRKILREYDDKSRQKRTRQDTMKLIIQGLIGVWLITALALHLAEVGLIGLSVIILASSLCGVTDEHAIGKAFTEALPFTALLTVFFAVVAVIIDQHLFAPIIAYVLEASPHNQLSLFYLFNGLLSSISDNVFVGTVYINEAKSALQQGVIDAKQFEMLAVAINTGTNLPSVATPNGQAAFLFLLTSALAPLIRLSYGRMVWMALPYTIVLTLVGLACVQFTLVPFTDWLLQSGWVSTPATTALLH.

12 helical membrane-spanning segments follow: residues 27–49 (GFLILNPLVFWVSPFTAGWLLVI), 62–82 (YPLLPGGLLAVEALFIGMTSA), 97–117 (LLLIFMVAGIYFMKQLLLLIF), 120–140 (LLLGIRSKTLLSLAFCFAAAF), 144–164 (FLDALTVVAVVISVAVGFYGI), 202–222 (LMMHAGVGTALGGVMTMVGEP), 238–258 (FLLRVAPVSVPVFICGIVTCI), 303–323 (GLIGVWLITALALHLAEVGLI), 348–368 (TEALPFTALLTVFFAVVAVII), 391–411 (LFYLFNGLLSSISDNVFVGTV), 447–467 (ATPNGQAAFLFLLTSALAPLI), and 475–495 (VWMALPYTIVLTLVGLACVQF).

It belongs to the NhaB Na(+)/H(+) (TC 2.A.34) antiporter family.

Its subcellular location is the cell inner membrane. It carries out the reaction 2 Na(+)(in) + 3 H(+)(out) = 2 Na(+)(out) + 3 H(+)(in). Na(+)/H(+) antiporter that extrudes sodium in exchange for external protons. The protein is Na(+)/H(+) antiporter NhaB of Cronobacter sakazakii (strain ATCC BAA-894) (Enterobacter sakazakii).